The chain runs to 60 residues: MATKTLKVTQTKSGIGRLPKHRATLTGLGLRRIGHTVELEDTPSVRGMINKVYYMVSVEG.

It belongs to the universal ribosomal protein uL30 family. Part of the 50S ribosomal subunit.

The polypeptide is Large ribosomal subunit protein uL30 (Shewanella denitrificans (strain OS217 / ATCC BAA-1090 / DSM 15013)).